A 135-amino-acid polypeptide reads, in one-letter code: Crustacean hyperglycemic hormones A* (135 aa).

An N-terminal signal peptide occupies residues 1–26 (MVSFRTMWSVVVVVVVASLASSGVQG). At Q62 the chain carries Pyrrolidone carboxylic acid. Cystine bridges form between C68–C104, C84–C100, and C87–C113. V133 is modified (valine amide).

Belongs to the arthropod CHH/MIH/GIH/VIH hormone family. In terms of tissue distribution, produced by the medulla terminalis X-organ in the eyestalks and transported to the sinus gland where they are stored and released.

It is found in the secreted. In terms of biological role, hormone found in the sinus gland of isopods and decapods which controls the blood sugar level. Has a secretagogue action over the amylase released from the midgut gland. May act as a stress hormone and may be involved in the control of molting and reproduction. The chain is Crustacean hyperglycemic hormones A* (CHHA*) from Faxonius limosus (Spinycheek crayfish).